Reading from the N-terminus, the 209-residue chain is Imidazole glycerol phosphate synthase subunit HisH (209 aa).

A Glutamine amidotransferase type-1 domain is found at 1-205; sequence MIAIIDYGMG…QGVVEAWKSS (205 aa). The Nucleophile role is filled by Cys-79. Catalysis depends on residues His-180 and Glu-182.

As to quaternary structure, heterodimer of HisH and HisF.

The protein resides in the cytoplasm. The enzyme catalyses 5-[(5-phospho-1-deoxy-D-ribulos-1-ylimino)methylamino]-1-(5-phospho-beta-D-ribosyl)imidazole-4-carboxamide + L-glutamine = D-erythro-1-(imidazol-4-yl)glycerol 3-phosphate + 5-amino-1-(5-phospho-beta-D-ribosyl)imidazole-4-carboxamide + L-glutamate + H(+). It catalyses the reaction L-glutamine + H2O = L-glutamate + NH4(+). Its pathway is amino-acid biosynthesis; L-histidine biosynthesis; L-histidine from 5-phospho-alpha-D-ribose 1-diphosphate: step 5/9. In terms of biological role, IGPS catalyzes the conversion of PRFAR and glutamine to IGP, AICAR and glutamate. The HisH subunit catalyzes the hydrolysis of glutamine to glutamate and ammonia as part of the synthesis of IGP and AICAR. The resulting ammonia molecule is channeled to the active site of HisF. In Bacillus cereus (strain ATCC 14579 / DSM 31 / CCUG 7414 / JCM 2152 / NBRC 15305 / NCIMB 9373 / NCTC 2599 / NRRL B-3711), this protein is Imidazole glycerol phosphate synthase subunit HisH.